Consider the following 177-residue polypeptide: NAD(P)H-quinone oxidoreductase subunit 6, chloroplastic (177 aa).

5 helical membrane-spanning segments follow: residues 10–30 (VLLV…VLLT), 32–52 (PIYS…FYIL), 61–81 (AQLL…VMFM), 90–112 (FYLW…FSLI), and 152–172 (FYLP…GAIT).

It belongs to the complex I subunit 6 family. In terms of assembly, NDH is composed of at least 16 different subunits, 5 of which are encoded in the nucleus.

The protein resides in the plastid. It localises to the chloroplast thylakoid membrane. The catalysed reaction is a plastoquinone + NADH + (n+1) H(+)(in) = a plastoquinol + NAD(+) + n H(+)(out). It carries out the reaction a plastoquinone + NADPH + (n+1) H(+)(in) = a plastoquinol + NADP(+) + n H(+)(out). In terms of biological role, NDH shuttles electrons from NAD(P)H:plastoquinone, via FMN and iron-sulfur (Fe-S) centers, to quinones in the photosynthetic chain and possibly in a chloroplast respiratory chain. The immediate electron acceptor for the enzyme in this species is believed to be plastoquinone. Couples the redox reaction to proton translocation, and thus conserves the redox energy in a proton gradient. In Acorus calamus var. americanus (American sweet flag), this protein is NAD(P)H-quinone oxidoreductase subunit 6, chloroplastic (ndhG).